We begin with the raw amino-acid sequence, 362 residues long: Lactosylceramide alpha-2,3-sialyltransferase (362 aa).

The Cytoplasmic portion of the chain corresponds to 1–5; the sequence is MRRPS. Residues 6-26 form a helical; Signal-anchor for type II membrane protein membrane-spanning segment; it reads LLLKDILKCTLLVFGVWILYI. The Lumenal portion of the chain corresponds to 27–362; the sequence is LKLNYTTEEC…DLSGGIDREF (336 aa). 4 N-linked (GlcNAc...) asparagine glycosylation sites follow: Asn30, Asn180, Asn224, and Asn334. An intrachain disulfide couples Cys139 to Cys297.

This sequence belongs to the glycosyltransferase 29 family.

It is found in the golgi apparatus membrane. The catalysed reaction is a beta-D-Gal-(1-&gt;4)-beta-D-Glc-(1&lt;-&gt;1)-Cer(d18:1(4E)) + CMP-N-acetyl-beta-neuraminate = a ganglioside GM3 (d18:1(4E)) + CMP + H(+). The enzyme catalyses ganglioside GA2 (d18:1(4E)/18:0) + CMP-N-acetyl-beta-neuraminate = ganglioside GM2 (d18:1(4E)/18:0) + CMP + H(+). It carries out the reaction a beta-D-Gal-(1&lt;-&gt;1')-ceramide + CMP-N-acetyl-beta-neuraminate = N-acetyl-alpha-neuraminosyl-(2-&gt;3)-beta-D-galactosyl-(1&lt;-&gt;1')-ceramide + CMP + H(+). It catalyses the reaction ganglioside GA1 (d18:1(4E)/18:0) + CMP-N-acetyl-beta-neuraminate = ganglioside GM1 (d18:1(4E)/18:0) + CMP + H(+). Transfers the sialyl group (N-acetyl-alpha-neuraminyl or NeuAc) from CMP-NeuAc to the non-reducing terminal galactose (Gal) of glycosphingolipids forming gangliosides (important molecules involved in the regulation of multiple cellular processes, including cell proliferation and differentiation, apoptosis, embryogenesis, development, and oncogenesis). Mainly involved in the biosynthesis of ganglioside GM3 but can also use different glycolipids as substrate acceptors such as D-galactosylceramide (GalCer), asialo-GM2 (GA2) and asialo-GM1 (GA1), although less preferentially than beta-D-Gal-(1-&gt;4)-beta-D-Glc-(1&lt;-&gt;1)-Cer (LacCer). The sequence is that of Lactosylceramide alpha-2,3-sialyltransferase (ST3GAL5) from Pan troglodytes (Chimpanzee).